The chain runs to 349 residues: Phospho-N-acetylmuramoyl-pentapeptide-transferase (349 aa).

10 helical membrane passes run 13–33 (LFFS…SLGV), 69–89 (GGGV…LPWG), 91–111 (FSTW…WYDD), 129–149 (FMVQ…IYGS), 165–185 (LSLP…VAII), 197–217 (LDGL…FVAL), 228–248 (VAYV…YNGF), 252–272 (LFMG…CAVM), 278–298 (ILVV…LQVL), and 327–347 (IVMR…AAVL).

This sequence belongs to the glycosyltransferase 4 family. MraY subfamily. Mg(2+) is required as a cofactor.

Its subcellular location is the cell inner membrane. It carries out the reaction UDP-N-acetyl-alpha-D-muramoyl-L-alanyl-gamma-D-glutamyl-meso-2,6-diaminopimeloyl-D-alanyl-D-alanine + di-trans,octa-cis-undecaprenyl phosphate = di-trans,octa-cis-undecaprenyl diphospho-N-acetyl-alpha-D-muramoyl-L-alanyl-D-glutamyl-meso-2,6-diaminopimeloyl-D-alanyl-D-alanine + UMP. The protein operates within cell wall biogenesis; peptidoglycan biosynthesis. Its function is as follows. Catalyzes the initial step of the lipid cycle reactions in the biosynthesis of the cell wall peptidoglycan: transfers peptidoglycan precursor phospho-MurNAc-pentapeptide from UDP-MurNAc-pentapeptide onto the lipid carrier undecaprenyl phosphate, yielding undecaprenyl-pyrophosphoryl-MurNAc-pentapeptide, known as lipid I. This Chlamydia pneumoniae (Chlamydophila pneumoniae) protein is Phospho-N-acetylmuramoyl-pentapeptide-transferase.